Here is a 464-residue protein sequence, read N- to C-terminus: NADH dehydrogenase [ubiquinone] flavoprotein 1, mitochondrial (464 aa).

The N-terminal 20 residues, 1 to 20 (MLAARRLLGGSLPSRVSVRF), are a transit peptide targeting the mitochondrion. Lys-81 carries the N6-acetyllysine; alternate modification. Residue Lys-81 is modified to N6-succinyllysine; alternate. Residue 87 to 96 (GRGGAGFPTG) coordinates NADH. An N6-acetyllysine modification is found at Lys-104. 199–247 (RGAGAYICGEETALIESIEGKQGKPRLKPPFPADVGVFGCPTTVANVET) provides a ligand contact to FMN. Arg-257 carries the post-translational modification Omega-N-methylarginine. Lys-375 carries the post-translational modification N6-acetyllysine. [4Fe-4S] cluster is bound by residues Cys-379, Cys-382, Cys-385, and Cys-425.

This sequence belongs to the complex I 51 kDa subunit family. In terms of assembly, core subunit of respiratory chain NADH dehydrogenase (Complex I) which is composed of 45 different subunits. This is a component of the flavoprotein-sulfur (FP) fragment of the enzyme. Interacts with RAB5IF. FMN serves as cofactor. [4Fe-4S] cluster is required as a cofactor.

The protein resides in the mitochondrion inner membrane. It carries out the reaction a ubiquinone + NADH + 5 H(+)(in) = a ubiquinol + NAD(+) + 4 H(+)(out). Core subunit of the mitochondrial membrane respiratory chain NADH dehydrogenase (Complex I) which catalyzes electron transfer from NADH through the respiratory chain, using ubiquinone as an electron acceptor. Part of the peripheral arm of the enzyme, where the electrons from NADH are accepted by flavin mononucleotide (FMN) and then passed along a chain of iron-sulfur clusters by electron tunnelling to the final acceptor ubiquinone. Contains FMN, which is the initial electron acceptor as well as one iron-sulfur cluster. The protein is NADH dehydrogenase [ubiquinone] flavoprotein 1, mitochondrial of Macaca fascicularis (Crab-eating macaque).